A 368-amino-acid polypeptide reads, in one-letter code: Histidinol-phosphate aminotransferase (368 aa).

Residue Lys226 is modified to N6-(pyridoxal phosphate)lysine.

It belongs to the class-II pyridoxal-phosphate-dependent aminotransferase family. Histidinol-phosphate aminotransferase subfamily. Homodimer. Pyridoxal 5'-phosphate serves as cofactor.

It catalyses the reaction L-histidinol phosphate + 2-oxoglutarate = 3-(imidazol-4-yl)-2-oxopropyl phosphate + L-glutamate. It participates in amino-acid biosynthesis; L-histidine biosynthesis; L-histidine from 5-phospho-alpha-D-ribose 1-diphosphate: step 7/9. The chain is Histidinol-phosphate aminotransferase from Colwellia psychrerythraea (strain 34H / ATCC BAA-681) (Vibrio psychroerythus).